Reading from the N-terminus, the 709-residue chain is Coiled-coil domain-containing protein 13 (709 aa).

Coiled coils occupy residues Ile-70–Leu-97, Glu-139–Lys-178, and Glu-206–Asn-288. At Ser-258 the chain carries Phosphoserine. Residues Lys-281–Lys-312 are disordered. Positions Ser-293 to Ser-302 are enriched in low complexity. Residues Asp-323–Gln-457 adopt a coiled-coil conformation. Disordered regions lie at residues Lys-462–Ser-499, Ser-512–Ala-542, and Lys-600–Gln-641. Residues Ser-469 and Ser-532 each carry the phosphoserine modification. Positions Gln-539 to Glu-604 form a coiled coil.

Interacts with PCM1, CEP290 and PCNT.

The protein localises to the cytoplasm. The protein resides in the cytoskeleton. Its subcellular location is the microtubule organizing center. It localises to the centrosome. It is found in the centriolar satellite. The protein localises to the cilium basal body. Required for primary cilia formation and promotes the localization of the ciliopathy protein BBS4 to both centriolar satellites and cilia. The chain is Coiled-coil domain-containing protein 13 from Mus musculus (Mouse).